The primary structure comprises 357 residues: Holliday junction branch migration complex subunit RuvB (357 aa).

The tract at residues 3-193 is large ATPase domain (RuvB-L); that stretch reads WDDTTDAEAA…FGFTAHMEFY (191 aa). ATP-binding positions include Leu-32, Arg-33, Gly-74, Lys-77, Thr-78, Thr-79, 140 to 142, Arg-183, Tyr-193, and Arg-230; that span reads EDF. Thr-78 provides a ligand contact to Mg(2+). The tract at residues 194–264 is small ATPAse domain (RuvB-S); the sequence is GPAELERVIH…IAAAALAVYE (71 aa). Residues 267 to 357 form a head domain (RuvB-H) region; the sequence is ARGLDRLDRG…GNGQPDLFGA (91 aa). Positions 303, 322, and 327 each coordinate DNA. Residues 337–357 form a disordered region; that stretch reads LGLTPPRPQSSGNGQPDLFGA.

This sequence belongs to the RuvB family. As to quaternary structure, homohexamer. Forms an RuvA(8)-RuvB(12)-Holliday junction (HJ) complex. HJ DNA is sandwiched between 2 RuvA tetramers; dsDNA enters through RuvA and exits via RuvB. An RuvB hexamer assembles on each DNA strand where it exits the tetramer. Each RuvB hexamer is contacted by two RuvA subunits (via domain III) on 2 adjacent RuvB subunits; this complex drives branch migration. In the full resolvosome a probable DNA-RuvA(4)-RuvB(12)-RuvC(2) complex forms which resolves the HJ.

It is found in the cytoplasm. It catalyses the reaction ATP + H2O = ADP + phosphate + H(+). Its function is as follows. The RuvA-RuvB-RuvC complex processes Holliday junction (HJ) DNA during genetic recombination and DNA repair, while the RuvA-RuvB complex plays an important role in the rescue of blocked DNA replication forks via replication fork reversal (RFR). RuvA specifically binds to HJ cruciform DNA, conferring on it an open structure. The RuvB hexamer acts as an ATP-dependent pump, pulling dsDNA into and through the RuvAB complex. RuvB forms 2 homohexamers on either side of HJ DNA bound by 1 or 2 RuvA tetramers; 4 subunits per hexamer contact DNA at a time. Coordinated motions by a converter formed by DNA-disengaged RuvB subunits stimulates ATP hydrolysis and nucleotide exchange. Immobilization of the converter enables RuvB to convert the ATP-contained energy into a lever motion, pulling 2 nucleotides of DNA out of the RuvA tetramer per ATP hydrolyzed, thus driving DNA branch migration. The RuvB motors rotate together with the DNA substrate, which together with the progressing nucleotide cycle form the mechanistic basis for DNA recombination by continuous HJ branch migration. Branch migration allows RuvC to scan DNA until it finds its consensus sequence, where it cleaves and resolves cruciform DNA. The chain is Holliday junction branch migration complex subunit RuvB from Streptomyces coelicolor (strain ATCC BAA-471 / A3(2) / M145).